The chain runs to 704 residues: Elongation factor G (704 aa).

The tr-type G domain occupies 8–290 (EKYRNIGICA…GVVRYLPAPN (283 aa)). Residues 17 to 24 (AHVDAGKT), 88 to 92 (DTPGH), and 142 to 145 (NKMD) contribute to the GTP site.

It belongs to the TRAFAC class translation factor GTPase superfamily. Classic translation factor GTPase family. EF-G/EF-2 subfamily.

The protein resides in the cytoplasm. Catalyzes the GTP-dependent ribosomal translocation step during translation elongation. During this step, the ribosome changes from the pre-translocational (PRE) to the post-translocational (POST) state as the newly formed A-site-bound peptidyl-tRNA and P-site-bound deacylated tRNA move to the P and E sites, respectively. Catalyzes the coordinated movement of the two tRNA molecules, the mRNA and conformational changes in the ribosome. This Francisella tularensis subsp. holarctica (strain FTNF002-00 / FTA) protein is Elongation factor G.